The chain runs to 916 residues: Isoleucine--tRNA ligase (916 aa).

A 'HIGH' region motif is present at residues 57–67 (PYANGNLHMGH). Glu554 is a binding site for L-isoleucyl-5'-AMP. The 'KMSKS' region signature appears at 595-599 (KMSKS). ATP is bound at residue Lys598. Zn(2+) contacts are provided by Cys885, Cys888, Cys905, and Cys908.

Belongs to the class-I aminoacyl-tRNA synthetase family. IleS type 1 subfamily. As to quaternary structure, monomer. Zn(2+) is required as a cofactor.

Its subcellular location is the cytoplasm. The enzyme catalyses tRNA(Ile) + L-isoleucine + ATP = L-isoleucyl-tRNA(Ile) + AMP + diphosphate. Its function is as follows. Catalyzes the attachment of isoleucine to tRNA(Ile). As IleRS can inadvertently accommodate and process structurally similar amino acids such as valine, to avoid such errors it has two additional distinct tRNA(Ile)-dependent editing activities. One activity is designated as 'pretransfer' editing and involves the hydrolysis of activated Val-AMP. The other activity is designated 'posttransfer' editing and involves deacylation of mischarged Val-tRNA(Ile). This is Isoleucine--tRNA ligase from Staphylococcus haemolyticus (strain JCSC1435).